Consider the following 123-residue polypeptide: uncharacterized protein (123 aa).

A disordered region spans residues 34–123 (PEKISQTVKK…MNRDGGVKKE (90 aa)). Basic and acidic residues-rich tracts occupy residues 50-60 (KKIDENKDKSP), 74-100 (TAKDAKDTDYQQKAKDAGKKIKEEFSQ), and 107-123 (EETRREGMNRDGGVKKE).

Its subcellular location is the mitochondrion. This is an uncharacterized protein from Schizosaccharomyces pombe (strain 972 / ATCC 24843) (Fission yeast).